A 308-amino-acid polypeptide reads, in one-letter code: V-type immunoglobulin domain-containing suppressor of T-cell activation (308 aa).

The N-terminal stretch at 1 to 32 (MGVPAVPEASSPRWGTLLLAIFLAASRGLVAA) is a signal peptide. An Ig-like V-type domain is found at 33–167 (FKVTTPYSLY…RFYGSMELQV (135 aa)). Topologically, residues 33-191 (FKVTTPYSLY…EQDSDSITAA (159 aa)) are extracellular. 3 N-linked (GlcNAc...) asparagine glycosylation sites follow: asparagine 49, asparagine 91, and asparagine 127. Cysteine 54 and cysteine 145 are oxidised to a cystine. Residues 192-212 (ALATGACIVGILCLPLILLLV) form a helical membrane-spanning segment. Over 213–308 (YKQRQVASHR…VPDSPNSEAI (96 aa)) the chain is Cytoplasmic. Residues 230–308 (MDSNTQGIEN…VPDSPNSEAI (79 aa)) are disordered. Serine 232 is modified (phosphoserine).

At the cell surface, may be cleaved by MMP14. In terms of processing, N-glycosylated. In terms of tissue distribution, expressed in spleen, thymus, bone marrow, lymph node, and in T-cells within the lamina propria of the small intestine. Detected on CD4+ and CD8+ T-cells, bone marrow-derived dendritic cells (BMDCs), peritoneal macrophages, neutrophils, and natural killer (NK) cells. In spleen and lymph nodes, highly expressed on CD4+ T-cell populations, and at lower levels on CD8+ T-cells. In thymus, has low expression on CD4+ cells and CD8+ cells, and not detected on CD4+CD8+ cells. Expressed in splenic and peritoneal CD11b cells. Not detected in most B cells and NK cells (at protein level). Also detected at lower levels in non-hematopoeitic tissues such as heart, brain, lung, kidney, muscle, ovary, and testis.

It is found in the cell membrane. Immunoregulatory receptor which inhibits the T-cell response. May promote differentiation of embryonic stem cells, by inhibiting BMP4 signaling. May stimulate MMP14-mediated MMP2 activation. This chain is V-type immunoglobulin domain-containing suppressor of T-cell activation, found in Mus musculus (Mouse).